The sequence spans 353 residues: C-X-C chemokine receptor type 4 (353 aa).

The tract at residues 1-22 is important for chemokine binding and signaling; it reads MEGIRIFTSDNYTEDDLGSGDY. The Extracellular segment spans residues 1–39; the sequence is MEGIRIFTSDNYTEDDLGSGDYDSMKEPCFREENAHFNR. N-linked (GlcNAc...) asparagine glycosylation is present at asparagine 11. Tyrosine 12 is subject to Sulfotyrosine. Serine 19 carries an O-linked (Xyl...) (chondroitin sulfate) serine glycan. The residue at position 22 (tyrosine 22) is a Sulfotyrosine. Disulfide bonds link cysteine 29-cysteine 275 and cysteine 110-cysteine 187. Residues 40–64 traverse the membrane as a helical segment; the sequence is IFLPTVYSIIFLTGIVGNGLVILVM. The Cytoplasmic portion of the chain corresponds to 65-78; sequence GYQKKLRSMTDKYR. A helical membrane pass occupies residues 79–100; the sequence is LHLSVADLLFVLTLPFWAVDAV. Residues 95-98 form a chemokine binding region; the sequence is WAVD. Topologically, residues 101 to 111 are extracellular; that stretch reads ANWYFGKFLCK. Residues 112 to 131 traverse the membrane as a helical segment; sequence AVHVIYTVNLYSSVLILAFI. A chemokine binding region spans residues 114 to 118; the sequence is HVIYT. The Cytoplasmic portion of the chain corresponds to 132–155; the sequence is SLDRYLAIVHATNSQKPRKLLAEK. The Important for signaling signature appears at 134 to 136; sequence DRY. The segment at 136–148 is involved in dimerization; when bound to chemokine; the sequence is YLAIVHATNSQKP. A helical transmembrane segment spans residues 156 to 175; sequence VVYVGVWLPAVLLTIPDLIF. The Extracellular segment spans residues 176 to 196; sequence ADIKEVDERYICDRFYPSDLW. Residues 187–191 form a chemokine binding, important for signaling region; sequence CDRFY. Residues 192-211 are involved in dimerization; that stretch reads PSDLWLVVFQFQHIVVGLLL. A helical membrane pass occupies residues 197-217; that stretch reads LVVFQFQHIVVGLLLPGIVIL. Residues 218-242 are Cytoplasmic-facing; it reads SCYCIIISKLSHSKGYQKRKALKTT. A helical membrane pass occupies residues 243 to 262; sequence VILILTFFACWLPYYIGISI. The Extracellular portion of the chain corresponds to 263-283; the sequence is DSFILLEIIQQGCEFESTVHK. The tract at residues 267–269 is involved in dimerization; that stretch reads LLE. The helical transmembrane segment at 284–303 threads the bilayer; sequence WISITEALAFFHCCLNPILY. The Cytoplasmic segment spans residues 304-353; it reads AFLGAKFKTSAQHALTSVSRGSSLKILSKGKRGGHSSVSTESESSSFHSS. Serine 320 and serine 322 each carry phosphoserine. Residues serine 325 and serine 326 each carry the phosphoserine; by PKC and GRK6 modification. The tract at residues 330–353 is disordered; it reads LSKGKRGGHSSVSTESESSSFHSS. Residue serine 331 is modified to Phosphoserine; by GRK6. Residue lysine 332 forms a Glycyl lysine isopeptide (Lys-Gly) (interchain with G-Cter in ubiquitin) linkage. Residues 338–353 are compositionally biased toward low complexity; that stretch reads HSSVSTESESSSFHSS. Position 340 is a phosphoserine; by GRK6 (serine 340). A phosphoserine mark is found at serine 349 and serine 352.

It belongs to the G-protein coupled receptor 1 family. Monomer. Can form homodimers. Interacts with CD164. Interacts with ARRB2; the interaction is dependent on the C-terminal phosphorylation of CXCR4 and allows activation of MAPK1 and MAPK3. Interacts with ARR3; the interaction is dependent on the C-terminal phosphorylation of CXCR4 and modulates calcium mobilization. Interacts with RNF113A; the interaction, enhanced by CXCL12, promotes CXCR4 ubiquitination and subsequent degradation. Interacts (via the cytoplasmic C-terminal) with ITCH (via the WW domains I and II); the interaction, enhanced by CXCL12, promotes CXCR4 ubiquitination and leads to its degradation. Interacts with extracellular ubiquitin. Interacts with DBN1; this interaction is enhanced by antigenic stimulation. Following LPS binding, may form a complex with GDF5, HSP90AA1 and HSPA8. Post-translationally, phosphorylated on agonist stimulation. Rapidly phosphorylated on serine and threonine residues in the C-terminal. Phosphorylation at Ser-325 and Ser-326 leads to recruitment of ITCH, ubiquitination and protein degradation. Ubiquitinated after ligand binding, leading to its degradation. Ubiquitinated by ITCH at the cell membrane on agonist stimulation. The ubiquitin-dependent mechanism, endosomal sorting complex required for transport (ESCRT), then targets CXCR4 for lysosomal degradation. This process is dependent also on prior Ser-/Thr-phosphorylation in the C-terminal of CXCR4. Also binding of ARRB1 to STAM negatively regulates CXCR4 sorting to lysosomes though modulating ubiquitination of SFR5S. In terms of processing, sulfation is required for efficient binding of CXCL12/SDF-1alpha and promotes its dimerization. Post-translationally, O- and N-glycosylated. N-glycosylation can mask coreceptor function. The O-glycosylation chondroitin sulfate attachment does not affect interaction with CXCL12/SDF-1alpha nor its coreceptor activity. Brain, heart, kidney, lung and liver.

It localises to the cell membrane. Its subcellular location is the cell junction. The protein resides in the early endosome. It is found in the late endosome. The protein localises to the lysosome. Its function is as follows. Receptor for the C-X-C chemokine CXCL12/SDF-1 that transduces a signal by increasing intracellular calcium ion levels and enhancing MAPK1/MAPK3 activation. Involved in the AKT signaling cascade. Plays a role in regulation of cell migration, e.g. during wound healing. Acts as a receptor for extracellular ubiquitin; leading to enhanced intracellular calcium ions and reduced cellular cAMP levels. Binds bacterial lipopolysaccharide (LPS) et mediates LPS-induced inflammatory response, including TNF secretion by monocytes. Involved in hematopoiesis and in cardiac ventricular septum formation. Also plays an essential role in vascularization of the gastrointestinal tract, probably by regulating vascular branching and/or remodeling processes in endothelial cells. Involved in cerebellar development. In the CNS, could mediate hippocampal-neuron survival. The sequence is that of C-X-C chemokine receptor type 4 (CXCR4) from Bos taurus (Bovine).